Reading from the N-terminus, the 359-residue chain is UDP-3-O-acylglucosamine N-acyltransferase (359 aa).

His256 serves as the catalytic Proton acceptor.

The protein belongs to the transferase hexapeptide repeat family. LpxD subfamily. In terms of assembly, homotrimer.

The catalysed reaction is a UDP-3-O-[(3R)-3-hydroxyacyl]-alpha-D-glucosamine + a (3R)-hydroxyacyl-[ACP] = a UDP-2-N,3-O-bis[(3R)-3-hydroxyacyl]-alpha-D-glucosamine + holo-[ACP] + H(+). The protein operates within bacterial outer membrane biogenesis; LPS lipid A biosynthesis. Catalyzes the N-acylation of UDP-3-O-acylglucosamine using 3-hydroxyacyl-ACP as the acyl donor. Is involved in the biosynthesis of lipid A, a phosphorylated glycolipid that anchors the lipopolysaccharide to the outer membrane of the cell. The protein is UDP-3-O-acylglucosamine N-acyltransferase of Rhodopseudomonas palustris (strain HaA2).